The chain runs to 315 residues: ATLTVPTTVPSVSEDCEQLRKAFSGWGTNEGLIIDILGHRNAEQRNLIRKTYAETYGEDLLKALDKELSNDFERLVLLWALDPAERDALLANEATKRWTSSNQVLMEIACTRSANQLLHARQAYHARYKKSLEEDVAHHTTGDFHKLLLPLVSSYRYEGEEVNMTLAKTEAKLLHEKISNKAYSDDDVIRVLATRSKAQINATLNHYKNEYGNDINKDLKADPKDEFLALLRSTVKCLVYPEKYFEKVLRLAINRRGTDEGALTRVVCTRAEVDLKVIADEYQRRNSVPLTRAIVKDTHGDYEKLLLVLAGHVEN.

4 Annexin repeats span residues 10 to 81, 82 to 153, 165 to 236, and 240 to 311; these read PSVS…LWAL, DPAE…PLVS, TLAK…STVK, and YPEK…VLAG. Ca(2+) contacts are provided by phenylalanine 23, glycine 25, glycine 27, and glutamate 67. Isoleucine 253, arginine 255, glycine 257, valine 295, aspartate 297, threonine 298, and glutamate 303 together coordinate Ca(2+).

Belongs to the annexin family. Monomer. Trimer. Oligomerization is calcium-independent. Disassembly of the oligomers seems to be required for calcium-binding.

It localises to the membrane. In terms of biological role, binds to phospholipid vesicles in a calcium-dependent manner in vitro. Prefers phosphatidyl-serine containing membranes. May have a role in the membrane cytoskeleton scaffolding or exocytotic processes. May be involved in oxidative stress response. This is Annexin Gh1 from Gossypium hirsutum (Upland cotton).